Here is a 53-residue protein sequence, read N- to C-terminus: Sodium/potassium-transporting ATPase subunit gamma (53 aa).

The chain crosses the membrane as a helical span at residues glycine 16–serine 34.

This sequence belongs to the FXYD family. Regulatory subunit of the sodium/potassium-transporting ATPase which is composed of a catalytic alpha subunit, an auxiliary non-catalytic beta subunit and an additional regulatory subunit. In terms of processing, the N-terminus is blocked. In terms of tissue distribution, highest levels expressed in the kidney and spleen. Restricted to the basolateral membrane in renal epithelial cells and varies in its level of expression along the nephron.

The protein resides in the membrane. Functionally, may be involved in forming the receptor site for cardiac glycoside binding or may modulate the transport function of the sodium ATPase. The sequence is that of Sodium/potassium-transporting ATPase subunit gamma (FXYD2) from Ovis aries (Sheep).